The sequence spans 589 residues: 3-(3-hydroxy-phenyl)propionate/3-hydroxycinnamic acid hydroxylase (589 aa).

Residues 15 to 44 and 283 to 293 contribute to the FAD site; these read DVLI…VAEK and FRVDRILLAGD.

Belongs to the PheA/TfdB FAD monooxygenase family. FAD serves as cofactor.

It catalyses the reaction 3-(3-hydroxyphenyl)propanoate + NADH + O2 + H(+) = 3-(2,3-dihydroxyphenyl)propanoate + NAD(+) + H2O. The enzyme catalyses (2E)-3-(3-hydroxyphenyl)prop-2-enoate + NADH + O2 + H(+) = (2E)-3-(2,3-dihydroxyphenyl)prop-2-enoate + NAD(+) + H2O. Its pathway is aromatic compound metabolism; 3-phenylpropanoate degradation. In terms of biological role, catalyzes the insertion of one atom of molecular oxygen into position 2 of the phenyl ring of 3-(3-hydroxyphenyl)propionate (3-HPP) and hydroxycinnamic acid (3HCI). In Comamonas testosteroni (Pseudomonas testosteroni), this protein is 3-(3-hydroxy-phenyl)propionate/3-hydroxycinnamic acid hydroxylase.